A 311-amino-acid polypeptide reads, in one-letter code: Urease accessory protein UreD (311 aa).

Belongs to the UreD family. As to quaternary structure, ureD, UreF and UreG form a complex that acts as a GTP-hydrolysis-dependent molecular chaperone, activating the urease apoprotein by helping to assemble the nickel containing metallocenter of UreC. The UreE protein probably delivers the nickel.

It is found in the cytoplasm. Required for maturation of urease via the functional incorporation of the urease nickel metallocenter. In Parasynechococcus marenigrum (strain WH8102), this protein is Urease accessory protein UreD.